Consider the following 214-residue polypeptide: tRNA (guanine-N(7)-)-methyltransferase (214 aa).

4 residues coordinate S-adenosyl-L-methionine: Glu-43, Glu-68, Asp-95, and Asp-117. Residue Asp-117 is part of the active site. Substrate-binding positions include Lys-121, Asp-153, and 190-193 (TEYE).

The protein belongs to the class I-like SAM-binding methyltransferase superfamily. TrmB family.

The enzyme catalyses guanosine(46) in tRNA + S-adenosyl-L-methionine = N(7)-methylguanosine(46) in tRNA + S-adenosyl-L-homocysteine. It functions in the pathway tRNA modification; N(7)-methylguanine-tRNA biosynthesis. Catalyzes the formation of N(7)-methylguanine at position 46 (m7G46) in tRNA. The chain is tRNA (guanine-N(7)-)-methyltransferase from Staphylococcus haemolyticus (strain JCSC1435).